We begin with the raw amino-acid sequence, 402 residues long: BTB and MATH domain-containing protein 40 (402 aa).

The segment at 1 to 25 (MSDRHLYGSDHSYLSSKPSCSSCRR) is disordered. Low complexity predominate over residues 15 to 25 (SSKPSCSSCRR). Residues 43–177 (VLTQRWTVCN…DKSLVISCHI (135 aa)) enclose the MATH domain. Positions 222–295 (TDMTIVAGPL…IYAGVIKSDI (74 aa)) constitute a BTB domain.

Interacts with cul-3.

It functions in the pathway protein modification; protein ubiquitination. Functionally, probable substrate-specific adapter of an E3 ubiquitin-protein ligase complex which mediates the ubiquitination and subsequent proteasomal degradation of target proteins. This Caenorhabditis elegans protein is BTB and MATH domain-containing protein 40 (bath-40).